Here is a 205-residue protein sequence, read N- to C-terminus: Penta-EF hand domain-containing protein 2 (205 aa).

EF-hand domains lie at 45–75 (EMQS…GGTP), 76–111 (LGIE…INNL), and 119–141 (DRNF…SGFQ). Ca(2+) is bound by residues Asp54, Asn56, Ser58, Thr60, Glu65, Asp89, Asn91, Asn93, Gln95, and Glu100.

It belongs to the Peflin/Sorcin family. In terms of assembly, in contrast to pefA, does not form homodimers in presence of Ca(2+). May form heterodimers with pefA.

The protein localises to the cytoplasm. The protein resides in the membrane. This chain is Penta-EF hand domain-containing protein 2 (pefB), found in Dictyostelium discoideum (Social amoeba).